Consider the following 170-residue polypeptide: Large ribosomal subunit protein uL10 (170 aa).

The protein belongs to the universal ribosomal protein uL10 family. As to quaternary structure, part of the ribosomal stalk of the 50S ribosomal subunit. The N-terminus interacts with L11 and the large rRNA to form the base of the stalk. The C-terminus forms an elongated spine to which L12 dimers bind in a sequential fashion forming a multimeric L10(L12)X complex.

Its function is as follows. Forms part of the ribosomal stalk, playing a central role in the interaction of the ribosome with GTP-bound translation factors. The protein is Large ribosomal subunit protein uL10 of Fusobacterium nucleatum subsp. nucleatum (strain ATCC 25586 / DSM 15643 / BCRC 10681 / CIP 101130 / JCM 8532 / KCTC 2640 / LMG 13131 / VPI 4355).